We begin with the raw amino-acid sequence, 242 residues long: Probable pectate lyase D (242 aa).

Residues 1-17 (MYQKSLLFSLLASSALA) form the signal peptide. Residue N216 is glycosylated (N-linked (GlcNAc...) asparagine). Positions 217-242 (DTGAEPEEISEGPSDACQYSEPLSSC) are disordered.

The protein belongs to the polysaccharide lyase 3 family. It depends on Ca(2+) as a cofactor.

The protein localises to the secreted. The enzyme catalyses Eliminative cleavage of (1-&gt;4)-alpha-D-galacturonan to give oligosaccharides with 4-deoxy-alpha-D-galact-4-enuronosyl groups at their non-reducing ends.. Functionally, pectinolytic enzyme consist of four classes of enzymes: pectin lyase, polygalacturonase, pectin methylesterase and rhamnogalacturonase. Among pectinolytic enzymes, pectin lyase is the most important in depolymerization of pectin, since it cleaves internal glycosidic bonds of highly methylated pectins. Favors pectate, the anion, over pectin, the methyl ester. The polypeptide is Probable pectate lyase D (plyD) (Aspergillus fumigatus (strain CBS 144.89 / FGSC A1163 / CEA10) (Neosartorya fumigata)).